Reading from the N-terminus, the 399-residue chain is Centrosomal protein 43 (399 aa).

A LisH domain is found at 70–102 (DGRLVASLVAEFLQFFNLDFTLAVFHPETSTIQ). 2 disordered regions span residues 142–216 (PASV…SKSS) and 236–311 (DARD…KRGS). Residues Ser-152 and Ser-160 each carry the phosphoserine modification. Over residues 163–172 (GKSSANSTPS) the composition is skewed to polar residues. Thr-170 carries the phosphothreonine modification. The segment covering 175-186 (PRYKGQGKKKTI) has biased composition (basic residues). The segment covering 197 to 216 (SETSQSEPSVSLSESKSKSS) has biased composition (low complexity). At Ser-202 the chain carries Phosphoserine. Residues 246–256 (DGDDVEGDSFF) show a composition bias toward acidic residues. Over residues 259-275 (PIPKPEKTYGWRAEPRK) the composition is skewed to basic and acidic residues. Low complexity predominate over residues 290-302 (RSGLSSLAGAPSL). Ser-301 and Ser-326 each carry phosphoserine. The interval 328–354 (GLGTGEDEDYADDFNSASHRSEKSELS) is disordered. Tyr-337 is subject to Phosphotyrosine.

Belongs to the CEP43 family. In terms of assembly, homodimer. Part of a ternary complex that contains CEP350, CEP43 and MAPRE1. Interacts directly with CEP350 and MAPRE1. Interacts with CEP19. Interacts (via N-terminus) with CEP350 (via C-terminus).

The protein localises to the cytoplasm. The protein resides in the cytoskeleton. It localises to the microtubule organizing center. Its subcellular location is the centrosome. It is found in the centriole. The protein localises to the cilium basal body. In terms of biological role, required for anchoring microtubules to the centrosomes. Required for ciliation. The protein is Centrosomal protein 43 of Mus musculus (Mouse).